Reading from the N-terminus, the 874-residue chain is Cyanophycin synthetase (874 aa).

Positions 224 to 480 (KTTLAEAGIP…VAAPVIDMLF (257 aa)) constitute an ATP-grasp domain. An ATP-binding site is contributed by 495-501 (GTNGKTT).

It in the C-terminal section; belongs to the MurCDEF family. Homodimer.

The enzyme catalyses [L-4-(L-arginin-2-N-yl)aspartate](n) + L-aspartate + ATP = [L-4-(L-arginin-2-N-yl)aspartate](n)-L-aspartate + ADP + phosphate + H(+). It carries out the reaction [L-4-(L-arginin-2-N-yl)aspartate](n)-L-aspartate + L-arginine + ATP = [L-4-(L-arginin-2-N-yl)aspartate](n+1) + ADP + phosphate + H(+). Functionally, catalyzes the ATP-dependent polymerization of arginine and aspartate to multi-L-arginyl-poly-L-aspartic acid (cyanophycin; a water-insoluble reserve polymer). This is Cyanophycin synthetase (cphA) from Geminocystis herdmanii (strain PCC 6308) (Synechocystis sp. (strain PCC 6308)).